We begin with the raw amino-acid sequence, 621 residues long: F-box only protein 21 (621 aa).

An F-box domain is found at Ser-28–Phe-77.

As to quaternary structure, interacts with SKP1 and CUL1.

Its function is as follows. Substrate-recognition component of the SCF (SKP1-CUL1-F-box protein)-type E3 ubiquitin ligase complex. This Pongo abelii (Sumatran orangutan) protein is F-box only protein 21 (FBXO21).